Here is a 225-residue protein sequence, read N- to C-terminus: UPF0758 protein MADE_1000235 (225 aa).

One can recognise an MPN domain in the interval 102–224; sequence VFNNVDDTKR…TISFAQRGLL (123 aa). His-173, His-175, and Asp-186 together coordinate Zn(2+). The JAMM motif signature appears at 173–186; the sequence is HNHPSGVAEPSHAD.

Belongs to the UPF0758 family.

This is UPF0758 protein MADE_1000235 from Alteromonas mediterranea (strain DSM 17117 / CIP 110805 / LMG 28347 / Deep ecotype).